The following is a 360-amino-acid chain: GTPase Obg (360 aa).

An Obg domain is found at Met1 to Ile156. Positions Ala157 to Pro360 constitute an OBG-type G domain. GTP-binding positions include Gly163 to Ser170, Phe188 to Val192, Asp210 to Gly213, Asn279 to Asp282, and Ser341 to Leu343. Ser170 and Thr190 together coordinate Mg(2+).

It belongs to the TRAFAC class OBG-HflX-like GTPase superfamily. OBG GTPase family. In terms of assembly, monomer. Mg(2+) is required as a cofactor.

Its subcellular location is the cytoplasm. In terms of biological role, an essential GTPase which binds GTP, GDP and possibly (p)ppGpp with moderate affinity, with high nucleotide exchange rates and a fairly low GTP hydrolysis rate. Plays a role in control of the cell cycle, stress response, ribosome biogenesis and in those bacteria that undergo differentiation, in morphogenesis control. The polypeptide is GTPase Obg (Helicobacter pylori (strain Shi470)).